Consider the following 400-residue polypeptide: Putative lysosomal acid lipase/cholesteryl ester hydrolase (400 aa).

The N-terminal stretch at 1–17 (MWRLIIIAILFQGLVNS) is a signal peptide. N34, N129, and N159 each carry an N-linked (GlcNAc...) asparagine glycan. The 301-residue stretch at 78–378 (PAVFLQHGLL…EWEHLDFIWG (301 aa)) folds into the AB hydrolase-1 domain. The active-site Charge relay system is S172. N271 carries N-linked (GlcNAc...) asparagine glycosylation. Residue H372 is the Charge relay system of the active site.

Belongs to the AB hydrolase superfamily. Lipase family. As to expression, expressed by the venom gland.

Its subcellular location is the secreted. It catalyses the reaction a sterol ester + H2O = a sterol + a fatty acid + H(+). In physiological conditions, is crucial for intracellular hydrolysis of cholesteryl esters and triglycerides that have been internalized via receptor-mediated endocytosis of lipoprotein particles. In venom, the biological contribution is unknown. The chain is Putative lysosomal acid lipase/cholesteryl ester hydrolase from Crotalus adamanteus (Eastern diamondback rattlesnake).